The primary structure comprises 203 residues: Protein shisa-like-1a (203 aa).

An N-terminal signal peptide occupies residues 1–25 (MIMNGRWSFNTLAIIFILLSTAALS). The Extracellular portion of the chain corresponds to 26–97 (AHFRVCEPYS…SDSFAHNNYT (72 aa)). Residues asparagine 53, asparagine 63, asparagine 72, asparagine 83, and asparagine 95 are each glycosylated (N-linked (GlcNAc...) asparagine). The helical transmembrane segment at 98-118 (ALIGVWIYGFFVMVLLALDFL) threads the bilayer. Topologically, residues 119–203 (YYSAMNYELC…LLSFQTSTAW (85 aa)) are cytoplasmic. A disordered region spans residues 157–191 (ELNTGPGLSQQQQLHLHHHHHHHHPRHSLRGDTQS). Over residues 161-170 (GPGLSQQQQL) the composition is skewed to low complexity. Residues 171–184 (HLHHHHHHHHPRHS) show a composition bias toward basic residues.

This sequence belongs to the shisa family.

The protein resides in the membrane. The sequence is that of Protein shisa-like-1a (shisal1a) from Danio rerio (Zebrafish).